Reading from the N-terminus, the 418-residue chain is Putative ion-transport protein YfeO (418 aa).

A run of 12 helical transmembrane segments spans residues 10-30 (LLLSLPAVAIGIASSLILIVV), 54-74 (DSPLWIIGVLTLTGIAVGLVI), 99-119 (ALPGLIVALILGLAGGVSLGP), 120-140 (EHPIMTVNIALAVAIGARLLP), 149-169 (ILASAGTIGALFGTPVAAALI), 186-206 (LFAPLMAAAAGALTTGLFFHP), 223-243 (ILSGAIVAAIAIAAGMVAVWC), 258-278 (VLVLGIGGFILGILGVIGGPV), 300-320 (DYFLLAVIKLAALVVAAASGF), 322-342 (GGRIFPAVFVGVALGLMLHEH), 343-363 (VPAVPAAITVSCAILGIVLVV), and 371-391 (LFMAAVVVPNTTLLPLLCIVM).

The protein belongs to the chloride channel (TC 2.A.49) family.

The protein resides in the cell membrane. This Escherichia coli O9:H4 (strain HS) protein is Putative ion-transport protein YfeO.